The sequence spans 953 residues: Protein translocase subunit SecA 1 (953 aa).

ATP contacts are provided by residues Gln83, Gly101–Thr105, and Asp490. Over residues Ala854 to Lys867 the composition is skewed to low complexity. A disordered region spans residues Ala854–Gly953. The segment covering Ser929 to Ala947 has biased composition (basic and acidic residues).

Belongs to the SecA family. Monomer and homodimer. Part of the essential Sec protein translocation apparatus which comprises SecA, SecYEG and auxiliary proteins SecDF. Other proteins may also be involved.

The protein localises to the cell membrane. Its subcellular location is the cytoplasm. The enzyme catalyses ATP + H2O + cellular proteinSide 1 = ADP + phosphate + cellular proteinSide 2.. Its function is as follows. Part of the Sec protein translocase complex. Interacts with the SecYEG preprotein conducting channel. Has a central role in coupling the hydrolysis of ATP to the transfer of proteins into and across the cell membrane, serving as an ATP-driven molecular motor driving the stepwise translocation of polypeptide chains across the membrane. In Mycolicibacterium smegmatis (strain ATCC 700084 / mc(2)155) (Mycobacterium smegmatis), this protein is Protein translocase subunit SecA 1.